The primary structure comprises 231 residues: Sugar fermentation stimulation protein homolog (231 aa).

It belongs to the SfsA family.

This is Sugar fermentation stimulation protein homolog from Geotalea uraniireducens (strain Rf4) (Geobacter uraniireducens).